Reading from the N-terminus, the 333-residue chain is Outer membrane protein assembly factor BamC (333 aa).

The N-terminal stretch at 1-18 is a signal peptide; it reads MKKCLFPLSVLAVIVATG. Cys-19 is lipidated: N-palmitoyl cysteine. Cys-19 carries S-diacylglycerol cysteine lipidation.

It belongs to the BamC family. As to quaternary structure, part of the Bam complex.

Its subcellular location is the cell outer membrane. Functionally, part of the outer membrane protein assembly complex, which is involved in assembly and insertion of beta-barrel proteins into the outer membrane. The polypeptide is Outer membrane protein assembly factor BamC (Actinobacillus succinogenes (strain ATCC 55618 / DSM 22257 / CCUG 43843 / 130Z)).